A 67-amino-acid polypeptide reads, in one-letter code: MKTQLAILLITLVLFQMFSQSDAILGEIWKGIKDILGKRGLNDLSDLDELFDGEISKADLDFLREIM.

Residues 1 to 23 form the signal peptide; that stretch reads MKTQLAILLITLVLFQMFSQSDA. Leu36 carries the post-translational modification Leucine amide. Residues 40-67 constitute a propeptide that is removed on maturation; that stretch reads GLNDLSDLDELFDGEISKADLDFLREIM.

The protein belongs to the non-disulfide-bridged peptide (NDBP) superfamily. Short antimicrobial peptide (group 4) family. Expressed by the venom gland.

The protein resides in the secreted. It is found in the target cell membrane. Functionally, alpha-helical and amphipathic peptide with weak antimicrobial activities against both Gram-positive (MIC=41 uM to &gt;82 uM) and Gram-negative (MIC&gt;82 uM) bacteria. It has extremely weak hemolytic activity against human erythrocytes. This chain is Spiniferin, found in Heterometrus spinifer (Asia giant forest scorpion).